Reading from the N-terminus, the 27-residue chain is Omega-conotoxin RVIA (27 aa).

Cystine bridges form between C1–C16, C8–C19, and C15–C26. 2 positions are modified to 4-hydroxyproline: P4 and P7.

This sequence belongs to the conotoxin O1 superfamily. As to expression, expressed by the venom duct.

It is found in the secreted. Its function is as follows. Omega-conotoxins act at presynaptic membranes, they bind and block voltage-gated calcium channels (Cav). The polypeptide is Omega-conotoxin RVIA (Conus radiatus (Rayed cone)).